A 256-amino-acid chain; its full sequence is Inner membrane transport permease YadH (256 aa).

At Met-1–Arg-22 the chain is on the periplasmic side. Residues Arg-22–Gly-251 form the ABC transmembrane type-2 domain. Residues Ile-23–Gly-43 form a helical membrane-spanning segment. At Asn-44–Asp-52 the chain is on the cytoplasmic side. The helical transmembrane segment at Met-53–Thr-73 threads the bilayer. At Asn-74–Glu-94 the chain is on the periplasmic side. Residues Leu-95–Ala-115 form a helical membrane-spanning segment. A topological domain (cytoplasmic) is located at residue Arg-116. A helical transmembrane segment spans residues Gly-117–His-137. A topological domain (periplasmic) is located at residue Ser-138. A helical membrane pass occupies residues Trp-139–Leu-159. At Asn-160 to Asp-169 the chain is on the cytoplasmic side. Residues Ile-170–Ser-190 form a helical membrane-spanning segment. Topologically, residues Leu-191 to Asp-223 are periplasmic. The helical transmembrane segment at Val-224–Cys-244 threads the bilayer. Residues Trp-245 to Ser-256 lie on the Cytoplasmic side of the membrane.

It belongs to the ABC-2 integral membrane protein family.

The protein resides in the cell inner membrane. This chain is Inner membrane transport permease YadH (yadH), found in Escherichia coli O157:H7.